The primary structure comprises 354 residues: Uroporphyrinogen decarboxylase (354 aa).

Substrate contacts are provided by residues 27 to 31 (RQAGR), Asp-77, Tyr-154, Thr-209, and His-327.

This sequence belongs to the uroporphyrinogen decarboxylase family. In terms of assembly, homodimer.

Its subcellular location is the cytoplasm. It catalyses the reaction uroporphyrinogen III + 4 H(+) = coproporphyrinogen III + 4 CO2. It functions in the pathway porphyrin-containing compound metabolism; protoporphyrin-IX biosynthesis; coproporphyrinogen-III from 5-aminolevulinate: step 4/4. Functionally, catalyzes the decarboxylation of four acetate groups of uroporphyrinogen-III to yield coproporphyrinogen-III. The protein is Uroporphyrinogen decarboxylase of Sodalis glossinidius (strain morsitans).